The primary structure comprises 378 residues: 1-acyl-sn-glycerol-3-phosphate acyltransferase delta (378 aa).

A helical transmembrane segment spans residues 11 to 31; it reads FLCHLVFCYVFIASGLIINTV. The HXXXXD motif motif lies at 96–101; it reads HKFEID. 3 helical membrane passes run 125–145, 307–327, and 338–358; these read ELAY…VFCS, TLVN…QFLV, and LASF…MIGV.

This sequence belongs to the 1-acyl-sn-glycerol-3-phosphate acyltransferase family.

The protein resides in the endoplasmic reticulum membrane. It catalyses the reaction a 1-acyl-sn-glycero-3-phosphate + an acyl-CoA = a 1,2-diacyl-sn-glycero-3-phosphate + CoA. It carries out the reaction (4Z,7Z,10Z,13Z,16Z,19Z)-docosahexaenoyl-CoA + 1-hexadecanoyl-sn-glycero-3-phosphate = 1-hexadecanoyl-2-(4Z,7Z,10Z,13Z,16Z,19Z-docosahexaenoyl)-sn-glycero-3-phosphate + CoA. The catalysed reaction is 1-octadecanoyl-sn-glycero-3-phosphate + (9Z,12Z)-octadecadienoyl-CoA = 1-octadecanoyl-2-(9Z,12Z-octadecadienoyl)-sn-glycero-3-phosphate + CoA. The enzyme catalyses 1-octadecanoyl-sn-glycero-3-phosphate + (4Z,7Z,10Z,13Z,16Z,19Z)-docosahexaenoyl-CoA = 1-octadecanoyl-2-(4Z,7Z,10Z,13Z,16Z,19Z-docosahexaenoyl)-sn-glycero-3-phosphate + CoA. It catalyses the reaction (4Z,7Z,10Z,13Z,16Z,19Z)-docosahexaenoyl-CoA + 1-(9Z-octadecenoyl)-sn-glycero-3-phosphate = 1-(9Z-octadecenoyl)-2-(4Z,7Z,10Z,13Z,16Z,19Z-docosahexaenoyl)-sn-glycero-3-phosphate + CoA. Its pathway is phospholipid metabolism; CDP-diacylglycerol biosynthesis; CDP-diacylglycerol from sn-glycerol 3-phosphate: step 2/3. Functionally, converts 1-acyl-sn-glycerol-3-phosphate (lysophosphatidic acid or LPA) into 1,2-diacyl-sn-glycerol-3-phosphate (phosphatidic acid or PA) by incorporating an acyl moiety at the sn-2 position of the glycerol backbone. Exhibits high acyl-CoA specificity for polyunsaturated fatty acyl-CoA, especially docosahexaenoyl-CoA (22:6-CoA, DHA-CoA). The sequence is that of 1-acyl-sn-glycerol-3-phosphate acyltransferase delta (AGPAT4) from Macaca fascicularis (Crab-eating macaque).